The chain runs to 285 residues: tRNA pseudouridine synthase A (285 aa).

Asp69 serves as the catalytic Nucleophile. A substrate-binding site is contributed by Tyr127.

Belongs to the tRNA pseudouridine synthase TruA family. Homodimer.

It catalyses the reaction uridine(38/39/40) in tRNA = pseudouridine(38/39/40) in tRNA. Functionally, formation of pseudouridine at positions 38, 39 and 40 in the anticodon stem and loop of transfer RNAs. The polypeptide is tRNA pseudouridine synthase A (Pseudomonas aeruginosa (strain ATCC 15692 / DSM 22644 / CIP 104116 / JCM 14847 / LMG 12228 / 1C / PRS 101 / PAO1)).